A 277-amino-acid polypeptide reads, in one-letter code: Large ribosomal subunit protein uL2c (277 aa).

The segment at 223–277 is disordered; it reads VVMNPIDHPHGGGEGRAPIGRKKPLTPWGHPALGKRSRKNNKYSDTLILRRRKNS.

This sequence belongs to the universal ribosomal protein uL2 family. In terms of assembly, part of the 50S ribosomal subunit.

The protein resides in the plastid. Its subcellular location is the chloroplast. This is Large ribosomal subunit protein uL2c (rpl2) from Marchantia polymorpha (Common liverwort).